The chain runs to 150 residues: Peptidoglycan-associated lipoprotein (150 aa).

Positions 1-19 are cleaved as a signal peptide; it reads MKKLTKVLLVAGSVAVLAA. Cys-20 carries the N-palmitoyl cysteine lipid modification. Cys-20 carries S-diacylglycerol cysteine lipidation. The OmpA-like domain maps to 37–150; the sequence is SVQDLQQRYN…SKNRRAVLAY (114 aa).

Belongs to the Pal lipoprotein family. In terms of assembly, the Tol-Pal system is composed of five core proteins: the inner membrane proteins TolA, TolQ and TolR, the periplasmic protein TolB and the outer membrane protein Pal. They form a network linking the inner and outer membranes and the peptidoglycan layer.

The protein localises to the cell outer membrane. In terms of biological role, part of the Tol-Pal system, which plays a role in outer membrane invagination during cell division and is important for maintaining outer membrane integrity. The sequence is that of Peptidoglycan-associated lipoprotein from Pasteurella multocida (strain Pm70).